A 397-amino-acid polypeptide reads, in one-letter code: Aurora kinase A (397 aa).

The segment at 1–118 is disordered; the sequence is MDRCKENCVS…SIQKTEDSKK (118 aa). 2 stretches are compositionally biased toward polar residues: residues 29–55 and 84–102; these read QIPS…SQRV and RLSN…SGNN. Phosphoserine occurs at positions 40 and 50. Over residues 103 to 118 the composition is skewed to basic and acidic residues; that stretch reads SEKEQTSIQKTEDSKK. The Protein kinase domain occupies 126–376; that stretch reads FDIGRPLGKG…LAEVLEHPWI (251 aa). Residues K136, K155, and 203 to 206 contribute to the ATP site; that span reads LEYA. D249 functions as the Proton acceptor in the catalytic mechanism. K251 participates in a covalent cross-link: Glycyl lysine isopeptide (Lys-Gly) (interchain with G-Cter in SUMO2). ATP contacts are provided by residues 253-254 and D267; that span reads EN. Residues 273-286 form an activation segment region; it reads HAPSSRRTTLCGTL. A phosphothreonine mark is found at T280 and T281. S335 carries the post-translational modification Phosphoserine; by PKA and PAK. Positions 378-387 are enriched in polar residues; it reads ANSSKPPTGH. The segment at 378–397 is disordered; sequence ANSSKPPTGHNSKEATSKSS. Basic and acidic residues predominate over residues 388 to 397; the sequence is NSKEATSKSS.

It belongs to the protein kinase superfamily. Ser/Thr protein kinase family. Aurora subfamily. Part of a complex composed of NEDD9, AURKA and CTTN; within the complex NEDD9 acts as a scaffold protein and is required for complex formation. Identified in a complex with AUNIP and NIN. Interacts with CPEB1, JTB, TACC1, TPX2, PPP2CA, as well as with the protein phosphatase type 1 (PP1) isoforms PPP1CA, PPP1CB and PPP1CC. Also interacts with its substrates ARHGEF2, BORA, KIF2A, PARD3, and p53/TP53. Interaction with BORA promotes phosphorylation of PLK1. Interacts with FBXL7 and CIMAP3. Interacts with GADD45A, competing with its oligomerization. Interacts (via C-terminus) with AUNIP (via C-terminus). Interacts with SIRT2. Interacts with FRY; this interaction facilitates AURKA-mediated PLK1 phosphorylation. Interacts with MYCN; interaction is phospho-independent and triggers AURKA activation; AURKA competes with FBXW7 for binding to unphosphorylated MYCN but not for binding to phosphorylated MYCN. Interacts with HNRNPU. Interacts with AAAS. Interacts with KLHL18 and CUL3. Interacts with FOXP1. Interacts with HDAC6; AURKA-mediated phosphorylation of HDAC6 promotes deacetylation of alpha-tubulin. Activated by phosphorylation at Thr-281; this brings about a change in the conformation of the activation segment. Phosphorylation at Thr-281 varies during the cell cycle and is highest during M phase. Autophosphorylated at Thr-281 upon TPX2 binding. Thr-281 can be phosphorylated by several kinases, including PAK and PKA. Protein phosphatase type 1 (PP1) binds AURKA and inhibits its activity by dephosphorylating Thr-281 during mitosis. Phosphorylation at Ser-335 decreases the kinase activity. PPP2CA controls degradation by dephosphorylating Ser-52 at the end of mitosis. Phosphorylated in embryonic brain neurons. Post-translationally, ubiquitinated by CHFR, leading to its degradation by the proteasome. Ubiquitinated by the anaphase-promoting complex (APC), leading to its degradation by the proteasome. Ubiquitinated by the E3 ubiquitin-protein ligase complex SCF(FBXL7) during mitosis, leading to its degradation by the proteasome. Ubiquitinated by the CUL3-KLHL18 ligase leading to its activation at the centrosome which is required for initiating mitotic entry. Ubiquitination mediated by CUL3-KLHL18 ligase does not lead to its degradation by the proteasome. In terms of tissue distribution, detected in neurons in brain cortex and hippocampus (at protein level). Expressed in mammary gland and tumor.

Its subcellular location is the cytoplasm. It localises to the cytoskeleton. It is found in the microtubule organizing center. The protein resides in the centrosome. The protein localises to the spindle pole. Its subcellular location is the centriole. It localises to the cell projection. It is found in the neuron projection. The protein resides in the cilium. The protein localises to the cilium basal body. Its subcellular location is the basolateral cell membrane. The catalysed reaction is L-seryl-[protein] + ATP = O-phospho-L-seryl-[protein] + ADP + H(+). The enzyme catalyses L-threonyl-[protein] + ATP = O-phospho-L-threonyl-[protein] + ADP + H(+). With respect to regulation, activation of CDK1, appears to be an upstream event of AURKA activation. Phosphatase inhibitor-2 (PPP1R2) and TPX2 act also as activators. Inactivated by the G2 checkpoint. Inhibited by GADD45A and p53/TP53, and through dephosphorylation by protein phosphatase type 1 (PP1). MLN8054 is also a potent and selective inhibitor. Activated during the early phase of cilia disassembly in the presence of FBXL7 and CIMAP3. Inhibited by the small molecule inhibitor VX-680. Functionally, mitotic serine/threonine kinase that contributes to the regulation of cell cycle progression. Associates with the centrosome and the spindle microtubules during mitosis and plays a critical role in various mitotic events including the establishment of mitotic spindle, centrosome duplication, centrosome separation as well as maturation, chromosomal alignment, spindle assembly checkpoint, and cytokinesis. Required for normal spindle positioning during mitosis and for the localization of NUMA1 and DCTN1 to the cell cortex during metaphase. Required for initial activation of CDK1 at centrosomes. Phosphorylates numerous target proteins, including ARHGEF2, BORA, BRCA1, CDC25B, DLGP5, HDAC6, KIF2A, LATS2, NDEL1, PARD3, PPP1R2, PLK1, RASSF1, TACC3, p53/TP53 and TPX2. Phosphorylates MCRS1 which is required for MCRS1-mediated kinetochore fiber assembly and mitotic progression. Regulates KIF2A tubulin depolymerase activity. Required for normal axon formation. Plays a role in microtubule remodeling during neurite extension. Important for microtubule formation and/or stabilization. Also acts as a key regulatory component of the p53/TP53 pathway, and particularly the checkpoint-response pathways critical for oncogenic transformation of cells, by phosphorylating and stabilizating p53/TP53. Phosphorylates its own inhibitors, the protein phosphatase type 1 (PP1) isoforms, to inhibit their activity. Inhibits cilia outgrowth. Required for cilia disassembly via phosphorylation of HDAC6 and subsequent deacetylation of alpha-tubulin. Regulates protein levels of the anti-apoptosis protein BIRC5 by suppressing the expression of the SCF(FBXL7) E3 ubiquitin-protein ligase substrate adapter FBXL7 through the phosphorylation of the transcription factor FOXP1. The polypeptide is Aurora kinase A (Rattus norvegicus (Rat)).